We begin with the raw amino-acid sequence, 475 residues long: Chromosomal replication initiator protein DnaA (475 aa).

The domain I, interacts with DnaA modulators stretch occupies residues 1–73; sequence MSDIEQERWS…LACWQAELPD (73 aa). The tract at residues 73–131 is domain II; the sequence is DVHRIDLMVRSAMRCAAPAKEAPAADPRRPEHGDGRASTELKMVATAPASANHDALGGS. Residues 132 to 354 form a domain III, AAA+ region region; sequence PLDPRLTFAS…GAINRLLAHS (223 aa). Residues Gly-179, Gly-181, Lys-182, and Thr-183 each coordinate ATP. The interval 355–475 is domain IV, binds dsDNA; sequence KLNAQPVTLE…VELLKRQLQE (121 aa).

This sequence belongs to the DnaA family. As to quaternary structure, oligomerizes as a right-handed, spiral filament on DNA at oriC.

The protein localises to the cytoplasm. Its function is as follows. Plays an essential role in the initiation and regulation of chromosomal replication. ATP-DnaA binds to the origin of replication (oriC) to initiate formation of the DNA replication initiation complex once per cell cycle. Binds the DnaA box (a 9 base pair repeat at the origin) and separates the double-stranded (ds)DNA. Forms a right-handed helical filament on oriC DNA; dsDNA binds to the exterior of the filament while single-stranded (ss)DNA is stabiized in the filament's interior. The ATP-DnaA-oriC complex binds and stabilizes one strand of the AT-rich DNA unwinding element (DUE), permitting loading of DNA polymerase. After initiation quickly degrades to an ADP-DnaA complex that is not apt for DNA replication. Binds acidic phospholipids. The sequence is that of Chromosomal replication initiator protein DnaA from Nitrobacter hamburgensis (strain DSM 10229 / NCIMB 13809 / X14).